The sequence spans 260 residues: Zinc import ATP-binding protein ZnuC (260 aa).

In terms of domain architecture, ABC transporter spans 18 to 234 (IRLQEVAVTF…PEYQKLFGSH (217 aa)). 50–57 (GNNGAGKT) is a binding site for ATP. The segment at 241 to 260 (VFPHDHHDHSGPALAGGGRG) is disordered.

It belongs to the ABC transporter superfamily. Zinc importer (TC 3.A.1.15.5) family. In terms of assembly, the complex is composed of two ATP-binding proteins (ZnuC), two transmembrane proteins (ZnuB) and a solute-binding protein (ZnuA).

The protein resides in the cell inner membrane. It catalyses the reaction Zn(2+)(out) + ATP(in) + H2O(in) = Zn(2+)(in) + ADP(in) + phosphate(in) + H(+)(in). Its function is as follows. Part of the ABC transporter complex ZnuABC involved in zinc import. Responsible for energy coupling to the transport system. The chain is Zinc import ATP-binding protein ZnuC from Halorhodospira halophila (strain DSM 244 / SL1) (Ectothiorhodospira halophila (strain DSM 244 / SL1)).